Consider the following 138-residue polypeptide: Protein X (138 aa).

Positions 24–48 (ESGGPAVSRPSAGSASRADSPLPSA) are disordered. The segment at 68–113 (PCCLGFTCAEFGAMVSTMNFVTWHAKRQLGMPTKDLWTPYVRNQLL) is mitochondrial targeting sequence.

This sequence belongs to the orthohepadnavirus protein X family. May form homodimer. May interact with host CEBPA, CFLAR, CREB1, DDB1, E4F1, HBXIP, HSPD1/HSP60, NFKBIA, POLR2E and SMAD4. Interacts with host SMC5-SMC6 complex and induces its degradation. Interacts with host TRPC4AP; leading to prevent ubiquitination of TRPC4AP. Interacts with host PLSCR1; this interaction promotes ubiquitination and degradation of HBx and impairs HBx-mediated cell proliferation. A fraction may be phosphorylated in insect cells and HepG2 cells, a human hepatoblastoma cell line. Phosphorylated in vitro by host protein kinase C or mitogen-activated protein kinase. N-acetylated in insect cells.

The protein localises to the host cytoplasm. Its subcellular location is the host nucleus. It localises to the host mitochondrion. Its function is as follows. Multifunctional protein that plays a role in silencing host antiviral defenses and promoting viral transcription. Does not seem to be essential for HBV infection. May be directly involved in development of cirrhosis and liver cancer (hepatocellular carcinoma). Most of cytosolic activities involve modulation of cytosolic calcium. The effect on apoptosis is controversial depending on the cell types in which the studies have been conducted. May induce apoptosis by localizing in mitochondria and causing loss of mitochondrial membrane potential. May also modulate apoptosis by binding host CFLAR, a key regulator of the death-inducing signaling complex (DISC). Promotes viral transcription by using the host E3 ubiquitin ligase DDB1 to target the SMC5-SMC6 complex to proteasomal degradation. This host complex would otherwise bind to viral episomal DNA, and prevents its transcription. Moderately stimulates transcription of many different viral and cellular transcription elements. Promoters and enhancers stimulated by HBx contain DNA binding sites for NF-kappa-B, AP-1, AP-2, c-EBP, ATF/CREB, or the calcium-activated factor NF-AT. In Arctic squirrel hepatitis virus (ASHV), this protein is Protein X.